A 363-amino-acid polypeptide reads, in one-letter code: Holliday junction branch migration complex subunit RuvB (363 aa).

A disordered region spans residues 1 to 23; that stretch reads MHKDEDQRLLGPAPLPNDPDRSL. Residues 1-184 form a large ATPase domain (RuvB-L) region; the sequence is MHKDEDQRLL…FGIPIRLNFY (184 aa). Residues leucine 23, arginine 24, glycine 65, lysine 68, threonine 69, threonine 70, 131 to 133, arginine 174, tyrosine 184, and arginine 221 contribute to the ATP site; that span reads EDY. Threonine 69 serves as a coordination point for Mg(2+). The tract at residues 185–255 is small ATPAse domain (RuvB-S); that stretch reads TIEELEYIVQ…IADEALSRLE (71 aa). The tract at residues 258–363 is head domain (RuvB-H); the sequence is HLGLDPLDRR…QTTLWDGEDD (106 aa). Residues arginine 294, arginine 313, and arginine 318 each contribute to the DNA site.

It belongs to the RuvB family. In terms of assembly, homohexamer. Forms an RuvA(8)-RuvB(12)-Holliday junction (HJ) complex. HJ DNA is sandwiched between 2 RuvA tetramers; dsDNA enters through RuvA and exits via RuvB. An RuvB hexamer assembles on each DNA strand where it exits the tetramer. Each RuvB hexamer is contacted by two RuvA subunits (via domain III) on 2 adjacent RuvB subunits; this complex drives branch migration. In the full resolvosome a probable DNA-RuvA(4)-RuvB(12)-RuvC(2) complex forms which resolves the HJ.

Its subcellular location is the cytoplasm. The enzyme catalyses ATP + H2O = ADP + phosphate + H(+). Functionally, the RuvA-RuvB-RuvC complex processes Holliday junction (HJ) DNA during genetic recombination and DNA repair, while the RuvA-RuvB complex plays an important role in the rescue of blocked DNA replication forks via replication fork reversal (RFR). RuvA specifically binds to HJ cruciform DNA, conferring on it an open structure. The RuvB hexamer acts as an ATP-dependent pump, pulling dsDNA into and through the RuvAB complex. RuvB forms 2 homohexamers on either side of HJ DNA bound by 1 or 2 RuvA tetramers; 4 subunits per hexamer contact DNA at a time. Coordinated motions by a converter formed by DNA-disengaged RuvB subunits stimulates ATP hydrolysis and nucleotide exchange. Immobilization of the converter enables RuvB to convert the ATP-contained energy into a lever motion, pulling 2 nucleotides of DNA out of the RuvA tetramer per ATP hydrolyzed, thus driving DNA branch migration. The RuvB motors rotate together with the DNA substrate, which together with the progressing nucleotide cycle form the mechanistic basis for DNA recombination by continuous HJ branch migration. Branch migration allows RuvC to scan DNA until it finds its consensus sequence, where it cleaves and resolves cruciform DNA. The polypeptide is Holliday junction branch migration complex subunit RuvB (Bartonella tribocorum (strain CIP 105476 / IBS 506)).